Consider the following 390-residue polypeptide: Glutamyl-tRNA reductase (390 aa).

Substrate is bound by residues threonine 46–arginine 49, serine 96, glutamate 101–glutamine 103, and glutamine 107. Cysteine 47 functions as the Nucleophile in the catalytic mechanism. Glycine 176–alanine 181 serves as a coordination point for NADP(+).

Belongs to the glutamyl-tRNA reductase family. In terms of assembly, homodimer.

It carries out the reaction (S)-4-amino-5-oxopentanoate + tRNA(Glu) + NADP(+) = L-glutamyl-tRNA(Glu) + NADPH + H(+). It functions in the pathway porphyrin-containing compound metabolism; protoporphyrin-IX biosynthesis; 5-aminolevulinate from L-glutamyl-tRNA(Glu): step 1/2. Catalyzes the NADPH-dependent reduction of glutamyl-tRNA(Glu) to glutamate 1-semialdehyde (GSA). The chain is Glutamyl-tRNA reductase from Thermus thermophilus (strain ATCC 27634 / DSM 579 / HB8).